Here is a 122-residue protein sequence, read N- to C-terminus: Class I hydrophobin 2 (122 aa).

The signal sequence occupies residues Met-1–Ala-22. 4 disulfide bridges follow: Cys-40–Cys-101, Cys-47–Cys-95, Cys-48–Cys-81, and Cys-102–Cys-115.

This sequence belongs to the fungal hydrophobin family. In terms of assembly, self-assembles to form functional amyloid fibrils called rodlets. Self-assembly into fibrillar rodlets occurs spontaneously at hydrophobic:hydrophilic interfaces and the rodlets further associate laterally to form amphipathic monolayers.

It localises to the secreted. It is found in the cell wall. Aerial growth, conidiation, and dispersal of filamentous fungi in the environment rely upon a capability of their secreting small amphipathic proteins called hydrophobins (HPBs) with low sequence identity. Class I can self-assemble into an outermost layer of rodlet bundles on aerial cell surfaces, conferring cellular hydrophobicity that supports fungal growth, development and dispersal; whereas Class II form highly ordered films at water-air interfaces through intermolecular interactions but contribute nothing to the rodlet structure. Hah2 is a class I hydrophobin that is involved in aerial growth of mycelia, but does not play a role in pathogenesis. The chain is Class I hydrophobin 2 from Heterobasidion annosum (Root rot fungus).